Consider the following 169-residue polypeptide: Lipoprotein signal peptidase (169 aa).

2 consecutive transmembrane segments (helical) span residues 56–76 and 84–104; these read FLPPGVLLILTTIIVSGVIIY and QPLFLGSFGLIAGGGIGNLID. Residues Asp113 and Asp139 contribute to the active site. The chain crosses the membrane as a helical span at residues 132–152; the sequence is WPIFNIADSAITIGACMLIIF.

It belongs to the peptidase A8 family.

The protein localises to the cell inner membrane. It carries out the reaction Release of signal peptides from bacterial membrane prolipoproteins. Hydrolyzes -Xaa-Yaa-Zaa-|-(S,diacylglyceryl)Cys-, in which Xaa is hydrophobic (preferably Leu), and Yaa (Ala or Ser) and Zaa (Gly or Ala) have small, neutral side chains.. The protein operates within protein modification; lipoprotein biosynthesis (signal peptide cleavage). Its function is as follows. This protein specifically catalyzes the removal of signal peptides from prolipoproteins. The sequence is that of Lipoprotein signal peptidase from Chlorobium phaeovibrioides (strain DSM 265 / 1930) (Prosthecochloris vibrioformis (strain DSM 265)).